A 215-amino-acid polypeptide reads, in one-letter code: Probable transaldolase (215 aa).

Lysine 83 acts as the Schiff-base intermediate with substrate in catalysis.

It belongs to the transaldolase family. Type 3B subfamily.

The protein resides in the cytoplasm. The enzyme catalyses D-sedoheptulose 7-phosphate + D-glyceraldehyde 3-phosphate = D-erythrose 4-phosphate + beta-D-fructose 6-phosphate. The protein operates within carbohydrate degradation; pentose phosphate pathway; D-glyceraldehyde 3-phosphate and beta-D-fructose 6-phosphate from D-ribose 5-phosphate and D-xylulose 5-phosphate (non-oxidative stage): step 2/3. In terms of biological role, transaldolase is important for the balance of metabolites in the pentose-phosphate pathway. This chain is Probable transaldolase, found in Clostridium perfringens (strain 13 / Type A).